The sequence spans 566 residues: Solute carrier family 22 member 16 (566 aa).

The chain crosses the membrane as a helical span at residues 20 to 40 (FASAFQTISCGIHYLASVFIA). Asparagine 52, asparagine 60, and asparagine 112 each carry an N-linked (GlcNAc...) asparagine glycan. Helical transmembrane passes span 149-169 (LIQP…GDIA), 176-196 (PIIW…AFTF), 201-221 (FVIV…VVFV), 237-257 (MHVH…GFLV), and 261-281 (WIYQ…CWML). Asparagine 344 carries N-linked (GlcNAc...) asparagine glycosylation. Transmembrane regions (helical) follow at residues 351–371 (TITV…FALN), 381–401 (LNLF…CLGM), 408–428 (NTLA…MLIP), 436–456 (IAMS…IYLY), 468–488 (LAVG…PFCV), and 493–513 (VWIF…GILT).

The protein belongs to the major facilitator (TC 2.A.1) superfamily. Organic cation transporter (TC 2.A.1.19) family.

It is found in the membrane. Functionally, high affinity carnitine transporter. The polypeptide is Solute carrier family 22 member 16 (slc22a16) (Xenopus laevis (African clawed frog)).